The primary structure comprises 514 residues: MEISWGRAMWRNFLGQSPDWYKLALLVFLIINPFIFLANPFIAGWLLVAEFIFTLAMALKCYPLLPGGLLAIEAVIIGMTSAAHVREEVAANLEVLLLLMFMVAGIYFMKQLLLFIFTRLLLSIRSKMVLSLAFCVAAAFLSAFLDALTVVAVVISVAVGFYGIYHRVASSRGEENDMLDDSHIDPHYKTVLEQFRGFLRSLMMHAGVGTALGGVMTMVGEPQNLIIAKAAGWHFGDFFLRMSPVTVPVLVCGLLTCMLVEKMRWFGYGETLPEKVRDVLQQFDDQSRKKRTRQDKIKLIVQAIIGVWLVTALALHLAEVGLIGLSVIILATALTGVTDEHAIGKAFTESLPFTALLTVFFSIVAVIIDQHLFAPIIQFVLQASEHAQLTLFYLFNGLLSSISDNVFVGTIYINEAKAAMENGAISLKQFELLAVAINTGTNLPSVATPNGQAAFLFLLTSALAPLIRLSYGRMVWMALPYTIVLTLIGLLCVEFTLAPATEWMTQAGWLATLS.

Transmembrane regions (helical) follow at residues 23–43 (LALL…PFIA), 63–83 (PLLP…TSAA), 97–117 (LLLM…LFIF), 120–140 (LLLS…AAAF), 144–164 (FLDA…FYGI), 202–222 (LMMH…VGEP), 238–258 (FFLR…LTCM), 303–323 (AIIG…VGLI), 357–377 (LTVF…APII), 391–411 (LFYL…VGTI), 447–467 (ATPN…APLI), and 475–495 (VWMA…CVEF).

The protein belongs to the NhaB Na(+)/H(+) (TC 2.A.34) antiporter family.

The protein localises to the cell inner membrane. It carries out the reaction 2 Na(+)(in) + 3 H(+)(out) = 2 Na(+)(out) + 3 H(+)(in). Functionally, na(+)/H(+) antiporter that extrudes sodium in exchange for external protons. This is Na(+)/H(+) antiporter NhaB from Salmonella paratyphi B (strain ATCC BAA-1250 / SPB7).